A 136-amino-acid chain; its full sequence is UPF0275 protein PM0493 (136 aa).

This sequence belongs to the UPF0275 family.

The chain is UPF0275 protein PM0493 from Pasteurella multocida (strain Pm70).